The primary structure comprises 197 residues: ATP-dependent Clp protease proteolytic subunit (197 aa).

Ser102 (nucleophile) is an active-site residue. His127 is a catalytic residue.

It belongs to the peptidase S14 family. As to quaternary structure, fourteen ClpP subunits assemble into 2 heptameric rings which stack back to back to give a disk-like structure with a central cavity, resembling the structure of eukaryotic proteasomes.

The protein resides in the cytoplasm. It catalyses the reaction Hydrolysis of proteins to small peptides in the presence of ATP and magnesium. alpha-casein is the usual test substrate. In the absence of ATP, only oligopeptides shorter than five residues are hydrolyzed (such as succinyl-Leu-Tyr-|-NHMec, and Leu-Tyr-Leu-|-Tyr-Trp, in which cleavage of the -Tyr-|-Leu- and -Tyr-|-Trp bonds also occurs).. In terms of biological role, cleaves peptides in various proteins in a process that requires ATP hydrolysis. Has a chymotrypsin-like activity. Plays a major role in the degradation of misfolded proteins. The protein is ATP-dependent Clp protease proteolytic subunit of Buchnera aphidicola subsp. Schizaphis graminum (strain Sg).